Here is a 96-residue protein sequence, read N- to C-terminus: Pro-glucagon (96 aa).

Basic and acidic residues-rich tracts occupy residues 1-12 (LQDAEDSSRFDA) and 19-30 (EARELSTPKXHS). Residues 1–35 (LQDAEDSSRFDADDTLAGEARELSTPKXHSEGTFS) are disordered.

Belongs to the glucagon family.

Its subcellular location is the secreted. Functionally, plays a key role in glucose metabolism and homeostasis. Regulates blood glucose by increasing gluconeogenesis and decreasing glycolysis. This chain is Pro-glucagon (gcg), found in Myoxocephalus scorpius (Shorthorn sculpin).